A 968-amino-acid chain; its full sequence is RNA polymerase-associated protein RapA (968 aa).

Positions 164–334 (DVGRRHAPRV…FARLRLLDPN (171 aa)) constitute a Helicase ATP-binding domain. 177–184 (DEVGLGKT) provides a ligand contact to ATP. The DEAH box motif lies at 280 to 283 (DEAH). The 196-residue stretch at 490-685 (RVEWLMGYLT…ALKAQLEQGR (196 aa)) folds into the Helicase C-terminal domain.

The protein belongs to the SNF2/RAD54 helicase family. RapA subfamily. As to quaternary structure, interacts with the RNAP. Has a higher affinity for the core RNAP than for the holoenzyme. Its ATPase activity is stimulated by binding to RNAP.

Its function is as follows. Transcription regulator that activates transcription by stimulating RNA polymerase (RNAP) recycling in case of stress conditions such as supercoiled DNA or high salt concentrations. Probably acts by releasing the RNAP, when it is trapped or immobilized on tightly supercoiled DNA. Does not activate transcription on linear DNA. Probably not involved in DNA repair. This chain is RNA polymerase-associated protein RapA, found in Salmonella paratyphi A (strain ATCC 9150 / SARB42).